The chain runs to 91 residues: UPF0223 protein SAB0963 (91 aa).

Belongs to the UPF0223 family.

The chain is UPF0223 protein SAB0963 from Staphylococcus aureus (strain bovine RF122 / ET3-1).